The chain runs to 90 residues: Small ribosomal subunit protein bS20 (90 aa).

The span at Met1–Ser10 shows a compositional bias: polar residues. The disordered stretch occupies residues Met1–Lys25.

The protein belongs to the bacterial ribosomal protein bS20 family.

Functionally, binds directly to 16S ribosomal RNA. The chain is Small ribosomal subunit protein bS20 from Orientia tsutsugamushi (strain Boryong) (Rickettsia tsutsugamushi).